The following is a 953-amino-acid chain: Trafficking kinesin-binding protein 1 (953 aa).

The HAP1 N-terminal domain occupies 47–354 (LEEQLPHYKL…EELKNLRNKT (308 aa)). Residues 104 to 356 (QMTKTYNDID…LKNLRNKTMP (253 aa)) adopt a coiled-coil conformation. Positions 359–509 (TSRRYHSLGL…RRLSLRRENY (151 aa)) are interaction with HGS. O-linked (GlcNAc) serine glycosylation is present at Ser-447. The tract at residues 472–495 (AADLGNDERSKKPGTPGTPGSHDL) is disordered. The stretch at 492 to 532 (SHDLETALRRLSLRRENYLSERRFFEEEQERKLQELAEKGE) forms a coiled coil. At Ser-537 the chain carries Phosphoserine. The segment at 658-672 (PGKCMSQTNSTFTFT) is interaction with OGT. Ser-680 and Ser-719 each carry an O-linked (GlcNAc) serine glycan. At Ser-719 the chain carries Phosphoserine. The disordered stretch occupies residues 777 to 796 (VIPSTPPNSPMQTPTSSPPS). The span at 786 to 796 (PMQTPTSSPPS) shows a compositional bias: low complexity. Ser-919 carries the post-translational modification Phosphoserine. An O-linked (GlcNAc) threonine glycan is attached at Thr-935.

This sequence belongs to the milton family. Interacts with RHOT1 and RHOT2. Found in a complex with KIF5B, OGT, RHOT1 and RHOT2. Interacts with HGS. Interacts with GABRA1. Interacts with KIF5C. Interacts with OGT; stable interaction is not required for glycosylation of this protein by OGT. Isoform 1 interacts with OGT. In terms of processing, O-glycosylated. Glycosylated by OGT; glycosylation in response to increased extracellular glucose levels is required for and leads to regulation of mitochondrial motility by OGT. In terms of tissue distribution, high expression in spinal cord and moderate expression in all other tissues and specific brain regions examined. Expressed in all cell lines examined.

Its subcellular location is the cytoplasm. The protein resides in the nucleus. It localises to the mitochondrion. The protein localises to the early endosome. It is found in the endosome. Its subcellular location is the mitochondrion membrane. The protein resides in the cell cortex. Involved in the regulation of endosome-to-lysosome trafficking, including endocytic trafficking of EGF-EGFR complexes and GABA-A receptors. Involved in mitochondrial motility. When O-glycosylated, abolishes mitochondrial motility. Crucial for recruiting OGT to the mitochondrial surface of neuronal processes. TRAK1 and RHOT form an essential protein complex that links KIF5 to mitochondria for light chain-independent, anterograde transport of mitochondria. The sequence is that of Trafficking kinesin-binding protein 1 (TRAK1) from Homo sapiens (Human).